Reading from the N-terminus, the 321-residue chain is Cytochrome c biogenesis protein CcsA (321 aa).

The next 6 helical transmembrane spans lie at 17 to 37 (IISI…IVGI), 43 to 63 (KGII…WIYS), 143 to 163 (MLLS…FLVI), 225 to 245 (VISL…VWAN), 258 to 275 (ETWA…LHTR), and 287 to 307 (IVAS…NLLG).

Belongs to the CcmF/CycK/Ccl1/NrfE/CcsA family. In terms of assembly, may interact with Ccs1.

It is found in the plastid. The protein localises to the chloroplast thylakoid membrane. Its function is as follows. Required during biogenesis of c-type cytochromes (cytochrome c6 and cytochrome f) at the step of heme attachment. The polypeptide is Cytochrome c biogenesis protein CcsA (Drimys granadensis).